A 272-amino-acid polypeptide reads, in one-letter code: Ribonuclease HII (272 aa).

In terms of domain architecture, RNase H type-2 spans 30 to 221; the sequence is GPVAGVDEVG…VRRAAEATGV (192 aa). The a divalent metal cation site is built by aspartate 36, glutamate 37, and aspartate 130.

It belongs to the RNase HII family. Mn(2+) is required as a cofactor. Mg(2+) serves as cofactor.

It localises to the cytoplasm. The enzyme catalyses Endonucleolytic cleavage to 5'-phosphomonoester.. In terms of biological role, endonuclease that specifically degrades the RNA of RNA-DNA hybrids. The protein is Ribonuclease HII of Mycolicibacterium smegmatis (strain ATCC 700084 / mc(2)155) (Mycobacterium smegmatis).